The sequence spans 503 residues: Catalase (503 aa).

Residues 1 to 26 (MAKDDKRLTGLFGHPVSDRENSMTAG) form a disordered region. Catalysis depends on residues His56 and Asn129. Residue Tyr339 participates in heme binding.

The protein belongs to the catalase family. In terms of assembly, homodimer. Requires heme as cofactor.

The enzyme catalyses 2 H2O2 = O2 + 2 H2O. Its function is as follows. Decomposes hydrogen peroxide into water and oxygen; serves to protect cells from the toxic effects of hydrogen peroxide. The chain is Catalase (katA) from Staphylococcus haemolyticus (strain JCSC1435).